The primary structure comprises 553 residues: Hyaluronan synthase 3 (553 aa).

At 1-15 (MPVQLTTALRVVGTS) the chain is on the cytoplasmic side. Residues 16–36 (LFALAVLGGILAAYVTGYQFI) traverse the membrane as a helical segment. Over 37–44 (HTEKHYLS) the chain is Extracellular. Residues 45 to 65 (FGLYGAILGLHLLIQSLFAFL) form a helical membrane-spanning segment. Residues 66–377 (EHRRMRRAGQ…NSLWFHKHHL (312 aa)) are Cytoplasmic-facing. A helical transmembrane segment spans residues 378–398 (WMTYESVVTGFFPFFLIATVI). At 399–408 (QLFYRGRIWN) the chain is on the extracellular side. Residues 409-429 (ILLFLLTVQLVGIIKATYACF) traverse the membrane as a helical segment. The Cytoplasmic portion of the chain corresponds to 430-440 (LRGNAEMIFMS). The helical transmembrane segment at 441 to 461 (LYSLLYMSSLLPAKIFAIATI) threads the bilayer. A glycan (N-linked (GlcNAc...) asparagine) is linked at asparagine 462. Residues 462 to 473 (NKSGWGTSGRKT) are Extracellular-facing. The chain crosses the membrane as a helical span at residues 474 to 494 (IVVNFIGLIPVSIWVAVLLGG). At 495–515 (LAYTAYCQDLFSETELAFLVS) the chain is on the cytoplasmic side. A helical transmembrane segment spans residues 516-536 (GAILYGCYWVALLMLYLAIIA). Over 537 to 553 (RRCGKKPEQYSLAFAEV) the chain is Extracellular.

Belongs to the NodC/HAS family. Homodimers. Forms heterodimers with HAS2 and HAS1. Mg(2+) serves as cofactor. Post-translationally, O-GlcNAcylation increases the hyaluronan synthase activity, HAS3 stability and its plasma membrane residence. The concentration of UDP-GlcNAc controls the level of O-GlcNAc modification.

The protein resides in the cell membrane. The protein localises to the golgi apparatus membrane. It localises to the golgi apparatus. Its subcellular location is the trans-Golgi network membrane. It is found in the early endosome. It catalyses the reaction [hyaluronan](n) + UDP-N-acetyl-alpha-D-glucosamine = N-acetyl-beta-D-glucosaminyl-(1-&gt;4)-[hyaluronan](n) + UDP + H(+). It carries out the reaction N-acetyl-beta-D-glucosaminyl-(1-&gt;4)-[hyaluronan](n) + UDP-alpha-D-glucuronate = [hyaluronan](n+1) + UDP + H(+). It participates in glycan biosynthesis; hyaluronan biosynthesis. Its activity is regulated as follows. The enzymatic activity depends on the availability of cytosolic levels of UDP-GlcUA and UDP-GlcNAc. Catalyzes the addition of GlcNAc or GlcUA monosaccharides to the nascent hyaluronan polymer. Therefore, it is essential to hyaluronan synthesis a major component of most extracellular matrices that has a structural role in tissues architectures and regulates cell adhesion, migration and differentiation. This is one of three isoenzymes responsible for cellular hyaluronan synthesis. The sequence is that of Hyaluronan synthase 3 from Homo sapiens (Human).